Consider the following 224-residue polypeptide: UPF0758 protein PSPA7_6095 (224 aa).

Positions 102-224 (VLESPQAVRD…PLSLAEYGWM (123 aa)) constitute an MPN domain. Positions 173, 175, and 186 each coordinate Zn(2+). The JAMM motif signature appears at 173–186 (HNHPSGDARPSLAD).

Belongs to the UPF0758 family.

This is UPF0758 protein PSPA7_6095 from Pseudomonas paraeruginosa (strain DSM 24068 / PA7) (Pseudomonas aeruginosa (strain PA7)).